Consider the following 206-residue polypeptide: Protein YmaB (206 aa).

The chain is Protein YmaB (ymaB) from Bacillus subtilis (strain 168).